The sequence spans 175 residues: MAETTRLLVDADACPVKDEIYRVGARYGLKTVIVANSWMNIPQSPLIERVVVPEGPDVADDWIAEQATPADIVITNDVPLAVRCLAKQTSVLRPNGEEIDERSVGMVSAMRDLMQGLRETGAVTTYNPSFGKADRSRFLSALDTLIVRLRRKAALARTVPSSSQTIHRPVPGDVP.

It belongs to the UPF0178 family.

This chain is UPF0178 protein GOX1710, found in Gluconobacter oxydans (strain 621H) (Gluconobacter suboxydans).